A 234-amino-acid polypeptide reads, in one-letter code: uncharacterized protein (234 aa).

A run of 6 helical transmembrane segments spans residues L5–F23, I38–V60, A73–W92, A127–L149, G170–S192, and T197–F217.

It is found in the cell membrane. This is an uncharacterized protein from Archaeoglobus fulgidus (strain ATCC 49558 / DSM 4304 / JCM 9628 / NBRC 100126 / VC-16).